Consider the following 186-residue polypeptide: Elongation factor P (186 aa).

The protein belongs to the elongation factor P family.

Its subcellular location is the cytoplasm. It functions in the pathway protein biosynthesis; polypeptide chain elongation. Involved in peptide bond synthesis. Stimulates efficient translation and peptide-bond synthesis on native or reconstituted 70S ribosomes in vitro. Probably functions indirectly by altering the affinity of the ribosome for aminoacyl-tRNA, thus increasing their reactivity as acceptors for peptidyl transferase. This chain is Elongation factor P, found in Prochlorococcus marinus (strain MIT 9313).